A 332-amino-acid polypeptide reads, in one-letter code: Solute carrier family 25 member 16 (332 aa).

Solcar repeat units follow at residues Phe34–Leu120, Ser128–Val216, and Leu238–Phe328. Transmembrane regions (helical) follow at residues Leu37 to Leu57, Gly88 to Ala108, Leu134 to Val154, Gly191 to Gly211, Leu244 to Thr264, and Gly299 to Phe319.

This sequence belongs to the mitochondrial carrier (TC 2.A.29) family.

The protein localises to the mitochondrion inner membrane. May be involved in the transport of coenzyme A in the mitochondrial matrix. Very little is known about the physiological function of this carrier. In Homo sapiens (Human), this protein is Solute carrier family 25 member 16.